Reading from the N-terminus, the 290-residue chain is Small ribosomal subunit biogenesis GTPase RsgA (290 aa).

Positions 62–219 constitute a CP-type G domain; sequence RTCLKRPAVA…VADTPGFSRL (158 aa). Residues 111-114 and 161-169 each bind GTP; these read NKAD and GPSGVGKSS. Zn(2+)-binding residues include Cys-243, Cys-248, His-250, and Cys-256.

Belongs to the TRAFAC class YlqF/YawG GTPase family. RsgA subfamily. As to quaternary structure, monomer. Associates with 30S ribosomal subunit, binds 16S rRNA. It depends on Zn(2+) as a cofactor.

Its subcellular location is the cytoplasm. One of several proteins that assist in the late maturation steps of the functional core of the 30S ribosomal subunit. Helps release RbfA from mature subunits. May play a role in the assembly of ribosomal proteins into the subunit. Circularly permuted GTPase that catalyzes slow GTP hydrolysis, GTPase activity is stimulated by the 30S ribosomal subunit. In Moorella thermoacetica (strain ATCC 39073 / JCM 9320), this protein is Small ribosomal subunit biogenesis GTPase RsgA.